An 870-amino-acid chain; its full sequence is Leucine--tRNA ligase (870 aa).

The short motif at 55 to 65 is the 'HIGH' region element; it reads PYPSGTLHMGH. Residues 626 to 630 carry the 'KMSKS' region motif; that stretch reads KMSKS. Lys629 serves as a coordination point for ATP.

Belongs to the class-I aminoacyl-tRNA synthetase family.

It is found in the cytoplasm. The enzyme catalyses tRNA(Leu) + L-leucine + ATP = L-leucyl-tRNA(Leu) + AMP + diphosphate. The polypeptide is Leucine--tRNA ligase (Prochlorococcus marinus (strain SARG / CCMP1375 / SS120)).